The sequence spans 299 residues: MAKWGQGNPHWIVEEREDGTNVNNWRWTERDATSLSKGKFQELLVGIVVENDAGRGEINELKQVEGEASCSSRKGKLIFFYEWNIKLGWKGIVKESGVKHKGLIEIPNLSEENEVDDTEVSLSKKKGDGVILKDLMKTAGTAKVREALGDYLKALKTEFTTGMILPTKAMATQELTVKRKLSGNTLQVQASSPVALGVRIPTVALHMMELFDTTVEQLYSIFTVKELTNKKIIMKWRCGNWPEEHYAMVALNFVPTLGQTELQLKEFLSICKEENMKFCWQKQHFEEIKGSLQLTPLNG.

The protein belongs to the AHA1 family.

In terms of biological role, co-chaperone that stimulates HSP90 ATPase activity. The chain is Putative activator of 90 kDa heat shock protein ATPase homolog 2 from Homo sapiens (Human).